A 400-amino-acid polypeptide reads, in one-letter code: Pyruvate dehydrogenase E1 component subunit beta-4, chloroplastic (400 aa).

Positions 1–34 (MAAASSLHAAPRVGSSSSFSSSSSAGRRSASAAR) are disordered. A chloroplast-targeting transit peptide spans 1 to 57 (MAAASSLHAAPRVGSSSSFSSSSSAGRRSASAARSVRVAAAAGSCAARRAGGRMVAR). Positions 9 to 34 (AAPRVGSSSSFSSSSSAGRRSASAAR) are enriched in low complexity. Glutamate 136 is a thiamine diphosphate binding site. K(+) is bound by residues isoleucine 189, alanine 237, isoleucine 238, and asparagine 242.

As to quaternary structure, tetramer of 2 alpha and 2 beta subunits. Thiamine diphosphate serves as cofactor.

It is found in the plastid. The protein resides in the chloroplast. It catalyses the reaction N(6)-[(R)-lipoyl]-L-lysyl-[protein] + pyruvate + H(+) = N(6)-[(R)-S(8)-acetyldihydrolipoyl]-L-lysyl-[protein] + CO2. Its function is as follows. The pyruvate dehydrogenase complex catalyzes the overall conversion of pyruvate to acetyl-CoA and CO(2). It contains multiple copies of three enzymatic components: pyruvate dehydrogenase (E1), dihydrolipoamide acetyltransferase (E2) and lipoamide dehydrogenase (E3). This chain is Pyruvate dehydrogenase E1 component subunit beta-4, chloroplastic, found in Oryza sativa subsp. japonica (Rice).